The sequence spans 568 residues: Autophagy-related protein 18 (568 aa).

One copy of the WD 1 repeat lies at 19 to 57; the sequence is KPSSSVNFITFNQDGSCIAVGNNKGYSIFTTNPFTKCYD. The span at 162-171 shows a compositional bias: polar residues; that stretch reads STDTSNSADN. Residues 162-210 are disordered; that stretch reads STDTSNSADNSGSIGSGPASGSGAGSGSASMTSTDSTPDAQSHSYLAYP. The segment covering 175–187 has biased composition (gly residues); that stretch reads IGSGPASGSGAGS. Low complexity predominate over residues 188 to 198; the sequence is GSASMTSTDST. WD repeat units follow at residues 268–308 and 313–352; these read AHKS…KLYQ and TYPT…SLES. A L/FRRG motif motif is present at residues 309–313; it reads FRRGT. The disordered stretch occupies residues 350-429; the sequence is LESKHKRKRA…ISGMSEDGKE (80 aa). Residues 375–394 show a composition bias toward acidic residues; it reads DLDDEIEDDGDDSDVDDVES. Positions 405–421 are enriched in polar residues; that stretch reads LSQGSSNSYTSMNSGIS. 2 WD repeats span residues 464–508 and 518–558; these read DFLP…DMVP and APAS…GGDC.

Belongs to the WD repeat PROPPIN family. As to quaternary structure, component of the PI(3,5)P2 regulatory complex.

Its subcellular location is the preautophagosomal structure membrane. It localises to the vacuole membrane. The protein resides in the endosome membrane. Its function is as follows. The PI(3,5)P2 regulatory complex regulates both the synthesis and turnover of phosphatidylinositol 3,5-bisphosphate (PtdIns(3,5)P2). Necessary for proper vacuole morphology. Plays an important role in osmotically-induced vacuole fragmentation. Required for cytoplasm to vacuole transport (Cvt) vesicle formation, pexophagy and starvation-induced autophagy. Involved in correct ATG9 trafficking to the pre-autophagosomal structure. Might also be involved in premeiotic DNA replication. The chain is Autophagy-related protein 18 (ATG18) from Meyerozyma guilliermondii (strain ATCC 6260 / CBS 566 / DSM 6381 / JCM 1539 / NBRC 10279 / NRRL Y-324) (Yeast).